The chain runs to 140 residues: Protein S40-1 (140 aa).

A disordered region spans residues 16 to 58 (YFPIRRREDGNEKENNRPVDFRENSERVWNKSSRRSKTTPLPS). Residues 20 to 44 (RRREDGNEKENNRPVDFRENSERVW) are compositionally biased toward basic and acidic residues.

It belongs to the senescence regulator S40 family.

The protein localises to the cytoplasm. This Arabidopsis thaliana (Mouse-ear cress) protein is Protein S40-1.